A 405-amino-acid chain; its full sequence is Peroxisomal membrane protein PEX13 (405 aa).

Pro residues predominate over residues 1-11 (MASQPPPPPKP). The disordered stretch occupies residues 1–71 (MASQPPPPPK…SQQTGSNNVN (71 aa)). Over 1–136 (MASQPPPPPK…SSRGAFQSIE (136 aa)) the chain is Peroxisomal matrix. The segment covering 61-71 (PSQQTGSNNVN) has biased composition (polar residues). A helical membrane pass occupies residues 137 to 157 (SIVHAFASVSMMMDATFSAVY). The segment at 147–235 (MMMDATFSAV…EDQATNSAKS (89 aa)) is targeting to peroxisomes. At 158-176 (NSFRAVLDVANHFSRLKIH) the chain is on the cytoplasmic side. The helical transmembrane segment at 177–194 (FTKVFSAFALVRTIRYLY) threads the bilayer. An interaction with PEX19 region spans residues 177 to 198 (FTKVFSAFALVRTIRYLYRRLQ). The Peroxisomal matrix segment spans residues 195 to 235 (RRLQWMMGLRRGSENEDLWAESEGTVACLSAEDQATNSAKS). A helical transmembrane segment spans residues 236–256 (WPIFLFFAVILGGPYLIWKLL). Residues 257–405 (STHNDEVTDN…TGKNGDKQDL (149 aa)) are Cytoplasmic-facing. One can recognise an SH3 domain in the interval 274 to 338 (DDHVVARAEY…PANYVKILGK (65 aa)). Ser-356 carries the phosphoserine modification.

The protein belongs to the peroxin-13 family. In terms of assembly, interacts (via SH3 domain) with PEX14 (via SH3-binding motif); forming the PEX13-PEX14 docking complex. Interacts with PEX19.

It localises to the peroxisome membrane. Component of the PEX13-PEX14 docking complex, a translocon channel that specifically mediates the import of peroxisomal cargo proteins bound to PEX5 receptor. The PEX13-PEX14 docking complex forms a large import pore which can be opened to a diameter of about 9 nm. Mechanistically, PEX5 receptor along with cargo proteins associates with the PEX14 subunit of the PEX13-PEX14 docking complex in the cytosol, leading to the insertion of the receptor into the organelle membrane with the concomitant translocation of the cargo into the peroxisome matrix. Involved in the import of PTS1- and PTS2-type containing proteins. This Mus musculus (Mouse) protein is Peroxisomal membrane protein PEX13.